The sequence spans 414 residues: Peptidoglycan beta-N-acetylmuramidase NamZ (414 aa).

The first 23 residues, 1 to 23, serve as a signal peptide directing secretion; that stretch reads MRKTIFAFLTGLMMFGTITAASA.

Belongs to the glycoside hydrolase 171 family. As to quaternary structure, homodimer in solution.

The protein resides in the secreted. It catalyses the reaction Hydrolysis of terminal, non-reducing N-acetylmuramic residues.. Functionally, catalyzes the exo-lytic cleavage of beta-1,4-N-acetylmuramate (beta-1,4-MurNAc) from the non-reducing ends of peptidoglycan chains. Specifically hydrolyzes the natural, peptidoglycan-derived disaccharide MurNAc-GlcNAc and the artificial substrate para-nitrophenyl beta-N-acetylmuramic acid (pNP-MurNAc). Requires a MurNAc entity at the non-reducing end, and cannot cleave GlcNAc-MurNAc. Probably plays a role in cell wall turnover and recycling. The sequence is that of Peptidoglycan beta-N-acetylmuramidase NamZ from Bacillus subtilis (strain 168).